The following is a 351-amino-acid chain: NAD-dependent protein deacetylase SIR2rp1 (351 aa).

Residues 10 to 325 form the Deacetylase sirtuin-type domain; sequence HVVGEPTFEG…RSFAQALGFG (316 aa). Residues 37–57 and 122–125 each bind NAD(+); these read GAGISVAAGIPDFRSPHTGLY and QNID. Catalysis depends on His142, which acts as the Proton acceptor. Zn(2+) contacts are provided by Cys150, Cys153, Cys174, and Cys177. Residues 213-215 and 238-240 contribute to the NAD(+) site; these read GTS and NLE. The interval 260–284 is disordered; the sequence is SSYRLSTGNGNGSKISSGDSSNSSS. A compositionally biased stretch (low complexity) spans 265–284; it reads STGNGNGSKISSGDSSNSSS. Residue Cys311 participates in NAD(+) binding.

This sequence belongs to the sirtuin family. Class I subfamily. The cofactor is Zn(2+).

It localises to the nucleus. The protein resides in the chromosome. Its subcellular location is the telomere. It carries out the reaction N(6)-acetyl-L-lysyl-[protein] + NAD(+) + H2O = 2''-O-acetyl-ADP-D-ribose + nicotinamide + L-lysyl-[protein]. Its function is as follows. NAD-dependent protein deacetylase, which is involved in repression of RNA polymerase I-mediated expression immediately adjacent to telomeres. It is however not involved in antigenic variation and subtelomeric variant surface glycoprotein (VSG) gene silencing. Plays a role in DNA damage response. Also has ADP-ribosylation activity in vitro. The protein is NAD-dependent protein deacetylase SIR2rp1 (SIR2rp1) of Trypanosoma brucei brucei (strain 927/4 GUTat10.1).